Consider the following 506-residue polypeptide: Deoxyguanosinetriphosphate triphosphohydrolase (506 aa).

The HD domain occupies 66-274 (RLTHSLEVQQ…MEAADDISYC (209 aa)).

This sequence belongs to the dGTPase family. Type 1 subfamily. As to quaternary structure, homotetramer. Mg(2+) serves as cofactor.

The catalysed reaction is dGTP + H2O = 2'-deoxyguanosine + triphosphate + H(+). Functionally, dGTPase preferentially hydrolyzes dGTP over the other canonical NTPs. The chain is Deoxyguanosinetriphosphate triphosphohydrolase from Yersinia pseudotuberculosis serotype O:3 (strain YPIII).